Reading from the N-terminus, the 300-residue chain is Polyamine aminopropyltransferase (300 aa).

A PABS domain is found at Trp-4–Asp-237. Residue Gln-33 coordinates S-methyl-5'-thioadenosine. The spermidine site is built by His-64 and Glu-88. S-methyl-5'-thioadenosine is bound by residues Asp-108 and Asp-140–Gly-141. The active-site Proton acceptor is Asp-158. Pro-167 contributes to the S-methyl-5'-thioadenosine binding site.

Belongs to the spermidine/spermine synthase family. In terms of assembly, homodimer or homotetramer.

Its subcellular location is the cytoplasm. It carries out the reaction S-adenosyl 3-(methylsulfanyl)propylamine + putrescine = S-methyl-5'-thioadenosine + spermidine + H(+). The protein operates within amine and polyamine biosynthesis; spermidine biosynthesis; spermidine from putrescine: step 1/1. Catalyzes the irreversible transfer of a propylamine group from the amino donor S-adenosylmethioninamine (decarboxy-AdoMet) to putrescine (1,4-diaminobutane) to yield spermidine. The protein is Polyamine aminopropyltransferase of Sulfurisphaera tokodaii (strain DSM 16993 / JCM 10545 / NBRC 100140 / 7) (Sulfolobus tokodaii).